The chain runs to 536 residues: Phosphoenolpyruvate carboxykinase (ATP) (536 aa).

Residues Arg-61, Tyr-195, and Lys-201 each coordinate substrate. ATP-binding positions include Lys-201, His-220, and 236 to 244; that span reads GLSGTGKTT. Mn(2+)-binding residues include Lys-201 and His-220. Residue Asp-257 participates in Mn(2+) binding. Positions 285, 322, and 447 each coordinate ATP. Arg-322 serves as a coordination point for substrate.

Belongs to the phosphoenolpyruvate carboxykinase (ATP) family. Mn(2+) is required as a cofactor.

It is found in the cytoplasm. The catalysed reaction is oxaloacetate + ATP = phosphoenolpyruvate + ADP + CO2. It functions in the pathway carbohydrate biosynthesis; gluconeogenesis. In terms of biological role, involved in the gluconeogenesis. Catalyzes the conversion of oxaloacetate (OAA) to phosphoenolpyruvate (PEP) through direct phosphoryl transfer between the nucleoside triphosphate and OAA. The protein is Phosphoenolpyruvate carboxykinase (ATP) of Rhizobium leguminosarum bv. trifolii (strain WSM2304).